The sequence spans 320 residues: Apolipoprotein E (320 aa).

The N-terminal stretch at 1-18 is a signal peptide; the sequence is MKVLWAALLVAFLAGCQG. 8 consecutive repeat copies span residues 82–103, 104–125, 126–147, 148–169, 170–191, 192–213, 214–236, and 237–258. Residues 82–258 form an 8 X 22 AA approximate tandem repeats region; the sequence is ALMEETMKEL…RLDEVKEQVE (177 aa). Residue Met145 is modified to Methionine sulfoxide. Ser149 bears the Phosphoserine mark. The segment at 160–170 is LDL and other lipoprotein receptors binding; sequence HLRKLRKRLLR. 164–167 serves as a coordination point for heparin; sequence LRKR. The tract at residues 212–293 is lipid-binding and lipoprotein association; sequence AATVGSSLAS…SWFEPLVEDM (82 aa). A glycan (O-linked (GalNAc...) threonine) is linked at Thr214. 232–239 contacts heparin; that stretch reads GERLRARM. Residues 269–320 are homooligomerization; that stretch reads QQMRLQAEAFQARLKSWFEPLVEDMQRQWAGLVEKVQAAVGASTTPVPSDNH. A specificity for association with VLDL region spans residues 281-293; that stretch reads RLKSWFEPLVEDM.

Belongs to the apolipoprotein A1/A4/E family. In terms of assembly, homotetramer. May interact with ABCA1; functionally associated with ABCA1 in the biogenesis of HDLs. May interact with APP/A4 amyloid-beta peptide; the interaction is extremely stable in vitro but its physiological significance is unclear. May interact with MAPT. May interact with MAP2. In the cerebrospinal fluid, interacts with secreted SORL1. Interacts with PMEL; this allows the loading of PMEL luminal fragment on ILVs to induce fibril nucleation. APOE exists as multiple glycosylated and sialylated glycoforms within cells and in plasma. The extent of glycosylation and sialylation are tissue and context specific. In terms of processing, glycated in plasma VLDL. Post-translationally, phosphorylated by FAM20C in the extracellular medium.

The protein resides in the secreted. Its subcellular location is the extracellular space. The protein localises to the extracellular matrix. It is found in the extracellular vesicle. It localises to the endosome. The protein resides in the multivesicular body. Its function is as follows. APOE is an apolipoprotein, a protein associating with lipid particles, that mainly functions in lipoprotein-mediated lipid transport between organs via the plasma and interstitial fluids. APOE is a core component of plasma lipoproteins and is involved in their production, conversion and clearance. Apolipoproteins are amphipathic molecules that interact both with lipids of the lipoprotein particle core and the aqueous environment of the plasma. As such, APOE associates with chylomicrons, chylomicron remnants, very low density lipoproteins (VLDL) and intermediate density lipoproteins (IDL) but shows a preferential binding to high-density lipoproteins (HDL). It also binds a wide range of cellular receptors including the LDL receptor/LDLR, the LDL receptor-related proteins LRP1, LRP2 and LRP8 and the very low-density lipoprotein receptor/VLDLR that mediate the cellular uptake of the APOE-containing lipoprotein particles. Finally, APOE also has a heparin-binding activity and binds heparan-sulfate proteoglycans on the surface of cells, a property that supports the capture and the receptor-mediated uptake of APOE-containing lipoproteins by cells. A main function of APOE is to mediate lipoprotein clearance through the uptake of chylomicrons, VLDLs, and HDLs by hepatocytes. APOE is also involved in the biosynthesis by the liver of VLDLs as well as their uptake by peripheral tissues ensuring the delivery of triglycerides and energy storage in muscle, heart and adipose tissues. By participating in the lipoprotein-mediated distribution of lipids among tissues, APOE plays a critical role in plasma and tissues lipid homeostasis. APOE is also involved in two steps of reverse cholesterol transport, the HDLs-mediated transport of cholesterol from peripheral tissues to the liver, and thereby plays an important role in cholesterol homeostasis. First, it is functionally associated with ABCA1 in the biogenesis of HDLs in tissues. Second, it is enriched in circulating HDLs and mediates their uptake by hepatocytes. APOE also plays an important role in lipid transport in the central nervous system, regulating neuron survival and sprouting. The polypeptide is Apolipoprotein E (APOE) (Cebus capucinus (White-faced sapajou)).